The following is a 227-amino-acid chain: Thiamine-phosphate synthase (227 aa).

4-amino-2-methyl-5-(diphosphooxymethyl)pyrimidine-binding positions include 50–54 (QFRQK) and D82. 2 residues coordinate Mg(2+): D83 and D102. A 4-amino-2-methyl-5-(diphosphooxymethyl)pyrimidine-binding site is contributed by T121. 147-149 (TTS) contacts 2-[(2R,5Z)-2-carboxy-4-methylthiazol-5(2H)-ylidene]ethyl phosphate. Position 150 (K150) interacts with 4-amino-2-methyl-5-(diphosphooxymethyl)pyrimidine. Residues G178 and 198-199 (LS) contribute to the 2-[(2R,5Z)-2-carboxy-4-methylthiazol-5(2H)-ylidene]ethyl phosphate site.

It belongs to the thiamine-phosphate synthase family. Requires Mg(2+) as cofactor.

It catalyses the reaction 2-[(2R,5Z)-2-carboxy-4-methylthiazol-5(2H)-ylidene]ethyl phosphate + 4-amino-2-methyl-5-(diphosphooxymethyl)pyrimidine + 2 H(+) = thiamine phosphate + CO2 + diphosphate. The enzyme catalyses 2-(2-carboxy-4-methylthiazol-5-yl)ethyl phosphate + 4-amino-2-methyl-5-(diphosphooxymethyl)pyrimidine + 2 H(+) = thiamine phosphate + CO2 + diphosphate. The catalysed reaction is 4-methyl-5-(2-phosphooxyethyl)-thiazole + 4-amino-2-methyl-5-(diphosphooxymethyl)pyrimidine + H(+) = thiamine phosphate + diphosphate. Its pathway is cofactor biosynthesis; thiamine diphosphate biosynthesis; thiamine phosphate from 4-amino-2-methyl-5-diphosphomethylpyrimidine and 4-methyl-5-(2-phosphoethyl)-thiazole: step 1/1. Functionally, condenses 4-methyl-5-(beta-hydroxyethyl)thiazole monophosphate (THZ-P) and 2-methyl-4-amino-5-hydroxymethyl pyrimidine pyrophosphate (HMP-PP) to form thiamine monophosphate (TMP). In Salinibacter ruber (strain DSM 13855 / M31), this protein is Thiamine-phosphate synthase.